The primary structure comprises 437 residues: Phosphomethylpyrimidine synthase (437 aa).

Substrate is bound by residues Asn-69, Met-98, Tyr-127, His-163, 185–187 (SRG), 226–229 (DACR), and Glu-265. His-269 is a binding site for Zn(2+). Tyr-292 contacts substrate. His-333 lines the Zn(2+) pocket. Cys-409, Cys-412, and Cys-416 together coordinate [4Fe-4S] cluster.

It belongs to the ThiC family. The cofactor is [4Fe-4S] cluster.

The catalysed reaction is 5-amino-1-(5-phospho-beta-D-ribosyl)imidazole + S-adenosyl-L-methionine = 4-amino-2-methyl-5-(phosphooxymethyl)pyrimidine + CO + 5'-deoxyadenosine + formate + L-methionine + 3 H(+). It functions in the pathway cofactor biosynthesis; thiamine diphosphate biosynthesis. Functionally, catalyzes the synthesis of the hydroxymethylpyrimidine phosphate (HMP-P) moiety of thiamine from aminoimidazole ribotide (AIR) in a radical S-adenosyl-L-methionine (SAM)-dependent reaction. In Clostridium botulinum (strain Loch Maree / Type A3), this protein is Phosphomethylpyrimidine synthase.